Here is a 251-residue protein sequence, read N- to C-terminus: MTQQSKETTDFGFQTVDKDEKQTMVAKVFHSVASKYDLMNDLMSFGIHRVWKRYTIEASGVRRNQRVLDLAGGTGDLTAKFSRLVGENGEVVLADINDSMLKMGREKLRDHGIVGNVSYVQANAEELPFPDDYFDCITISFGLRNVTDKAKALRSMFRVLKPGGRLLVLEFSKPVLDPLSKIYDAYSFHILPRIGQVIVNDADSYRYLTESIRMHPDQETLKGMMEEAGFDQVSYTNMTGGIVALHKGFKF.

S-adenosyl-L-methionine is bound by residues threonine 74, aspartate 95, 123-124, and serine 140; that span reads NA.

Belongs to the class I-like SAM-binding methyltransferase superfamily. MenG/UbiE family.

It carries out the reaction a 2-demethylmenaquinol + S-adenosyl-L-methionine = a menaquinol + S-adenosyl-L-homocysteine + H(+). The catalysed reaction is a 2-methoxy-6-(all-trans-polyprenyl)benzene-1,4-diol + S-adenosyl-L-methionine = a 5-methoxy-2-methyl-3-(all-trans-polyprenyl)benzene-1,4-diol + S-adenosyl-L-homocysteine + H(+). It functions in the pathway quinol/quinone metabolism; menaquinone biosynthesis; menaquinol from 1,4-dihydroxy-2-naphthoate: step 2/2. It participates in cofactor biosynthesis; ubiquinone biosynthesis. Its function is as follows. Methyltransferase required for the conversion of demethylmenaquinol (DMKH2) to menaquinol (MKH2) and the conversion of 2-polyprenyl-6-methoxy-1,4-benzoquinol (DDMQH2) to 2-polyprenyl-3-methyl-6-methoxy-1,4-benzoquinol (DMQH2). The sequence is that of Ubiquinone/menaquinone biosynthesis C-methyltransferase UbiE from Proteus mirabilis (strain HI4320).